Here is a 250-residue protein sequence, read N- to C-terminus: ATP synthase subunit a (250 aa).

The next 6 helical transmembrane spans lie at 27 to 47 (FTNAALFMFGIVAIIFFFLTF), 85 to 105 (FFPLVFSLFTFVLVSNVVGLI), 115 to 135 (LIVTAAMALLVIGTVIVYGFV), 141 to 161 (FLHLFVPSGVPAFLLPFLVVI), 181 to 201 (MLAGHIALKVFAFFVVGLASA), and 223 to 243 (ELLVAMLQAYVFAVLTSIYLN).

The protein belongs to the ATPase A chain family. In terms of assembly, F-type ATPases have 2 components, CF(1) - the catalytic core - and CF(0) - the membrane proton channel. CF(1) has five subunits: alpha(3), beta(3), gamma(1), delta(1), epsilon(1). CF(0) has three main subunits: a(1), b(2) and c(9-12). The alpha and beta chains form an alternating ring which encloses part of the gamma chain. CF(1) is attached to CF(0) by a central stalk formed by the gamma and epsilon chains, while a peripheral stalk is formed by the delta and b chains.

Its subcellular location is the cell inner membrane. Its function is as follows. Key component of the proton channel; it plays a direct role in the translocation of protons across the membrane. This is ATP synthase subunit a from Xanthobacter autotrophicus (strain ATCC BAA-1158 / Py2).